A 350-amino-acid chain; its full sequence is C-X-C chemokine receptor type 1 (350 aa).

Residues 1–39 (MSNITDPQMWDFDDLNFTGMPPADEDYSPCMLETETLNK) are Extracellular-facing. 2 N-linked (GlcNAc...) asparagine glycosylation sites follow: asparagine 3 and asparagine 16. A helical transmembrane segment spans residues 40–66 (YVVIIAYALVFLLSLLGNSLVMLVILY). The Cytoplasmic portion of the chain corresponds to 67–75 (SRVGRSVTD). Residues 76–96 (VYLLNLALADLLFALTLPIWA) traverse the membrane as a helical segment. Topologically, residues 97–111 (ASKVNGWIFGTFLCK) are extracellular. Cysteine 110 and cysteine 187 form a disulfide bridge. A helical transmembrane segment spans residues 112–133 (VVSLLKEVNFYSGILLLACISV). The Cytoplasmic portion of the chain corresponds to 134-154 (DRYLAIVHATRTLTQKRHLVK). The helical transmembrane segment at 155–174 (FVCLGCWGLSMNLSLPFFLF) threads the bilayer. Topologically, residues 175 to 199 (RQAYHPNNSSPVCYEVLGNDTAKWR) are extracellular. Residues 200 to 220 (MVLRILPHTFGFIVPLFVMLF) traverse the membrane as a helical segment. Topologically, residues 221–242 (CYGFTLRTLFKAHMGQKHRAMR) are cytoplasmic. The helical transmembrane segment at 243 to 264 (VIFAVVLIFLLCWLPYNLVLLA) threads the bilayer. Residues 265-285 (DTLMRTQVIQESCERRNNIGR) are Extracellular-facing. The chain crosses the membrane as a helical span at residues 286 to 308 (ALDATEILGFLHSCLNPIIYAFI). At 309-350 (GQNFRHGFLKILAMHGLVSKEFLARHRVTSYTSSSVNVSSNL) the chain is on the cytoplasmic side.

It belongs to the G-protein coupled receptor 1 family. In terms of assembly, interacts with IL8. Interacts with GNAI2.

It localises to the cell membrane. Its function is as follows. Receptor to interleukin-8, which is a powerful neutrophils chemotactic factor. Binding of IL-8 to the receptor causes activation of neutrophils. This response is mediated via a G-protein that activates a phosphatidylinositol-calcium second messenger system. The protein is C-X-C chemokine receptor type 1 (CXCR1) of Homo sapiens (Human).